We begin with the raw amino-acid sequence, 717 residues long: Scinderin (717 aa).

An actin-severing region spans residues 1-363 (MAPERHPPAF…DGFGKVYVTE (363 aa)). The Gelsolin-like 1 repeat unit spans residues 28 to 108 (ELVPVPPSRH…IQGYESNEFV (81 aa)). Residues 112 to 119 (KGGIKYKA) and 138 to 146 (RLLHIKGRR) each bind a 1,2-diacyl-sn-glycero-3-phospho-(1D-myo-inositol-4,5-bisphosphate). 5 Gelsolin-like repeats span residues 148–220 (VRAT…PDEL), 265–340 (VVAE…TPIF), 408–483 (RVPV…PHLL), 526–590 (AEVD…EEFW), and 628–703 (IEEV…PPTF). Residues 364 to 715 (RVAKIEQIEF…WFLAWDSNKW (352 aa)) form a ca(2+)-dependent actin binding region. Positions 538, 539, 562, 643, 644, and 666 each coordinate Ca(2+).

This sequence belongs to the villin/gelsolin family.

It is found in the cytoplasm. The protein localises to the cytoskeleton. The protein resides in the cell projection. Its subcellular location is the podosome. Functionally, ca(2+)-dependent actin filament-severing protein that has a regulatory function in exocytosis by affecting the organization of the microfilament network underneath the plasma membrane. In vitro, also has barbed end capping and nucleating activities in the presence of Ca(2+). Severing activity is inhibited by phosphatidylinositol 4,5-bis-phosphate (PIP2). Required for megakaryocyte differentiation, maturation, polyploidization and apoptosis with the release of platelet-like particles. Plays a role in osteoclastogenesis (OCG) and actin cytoskeletal organization in osteoclasts. Regulates chondrocyte proliferation and differentiation. Inhibits cell proliferation and tumorigenesis. Signaling is mediated by MAPK, p38 and JNK pathways. This is Scinderin (SCIN) from Gallus gallus (Chicken).